The following is a 500-amino-acid chain: MTIFDNYEVWFVIGSQHLYGPETLRQVTQHAEHVVNALNTEAKLPCKLVLKPLGTTPDEITAICRDANYDDRCAGLVVWLHTFSPAKMWINGLTMLNKPLLQFHTQFNAALPWDSIDMDFMNLNQTAHGGREFGFIGARMRQQHAVVTGHWQDKQAHERIGSWMRQAVSKQDTRHLKVCRFGDNMREVAVTDGDKVAAQIKFGFSVNTWAVGDLVQVVNSISDGDVNALVDEYESCYTMTPATQIHGEKRQNVLEAARIELGMKRFLEQGGFHAFTTTFEDLHGLKQLPGLAVQRLMQQGYGFAGEGDWKTAALLRIMKVMSTGLQGGTSFMEDYTYHFEKDNDLVLGSHMLEVCPSIAVEEKPILDVQHLGIGGKDDPARLIFNTQTGPAIVASLIDLGDRYRLLVNCIDTVKTPHSLPKLPVANALWKAQPDLPTASEAWILAGGAHHTVFSHALNLNDMRQFAEMHDIEITVIDNDTRLPAFKDALRWNEVYYGFRR.

Residues Glu306, Glu333, His350, and His450 each coordinate Mn(2+).

Belongs to the arabinose isomerase family. Homohexamer. Mn(2+) serves as cofactor.

The catalysed reaction is beta-L-arabinopyranose = L-ribulose. The protein operates within carbohydrate degradation; L-arabinose degradation via L-ribulose; D-xylulose 5-phosphate from L-arabinose (bacterial route): step 1/3. Functionally, catalyzes the conversion of L-arabinose to L-ribulose. This chain is L-arabinose isomerase, found in Escherichia coli O7:K1 (strain IAI39 / ExPEC).